A 152-amino-acid polypeptide reads, in one-letter code: Protein-export protein SecB (152 aa).

Belongs to the SecB family. As to quaternary structure, homotetramer, a dimer of dimers. One homotetramer interacts with 1 SecA dimer.

Its subcellular location is the cytoplasm. In terms of biological role, one of the proteins required for the normal export of preproteins out of the cell cytoplasm. It is a molecular chaperone that binds to a subset of precursor proteins, maintaining them in a translocation-competent state. It also specifically binds to its receptor SecA. The chain is Protein-export protein SecB from Rickettsia africae (strain ESF-5).